A 134-amino-acid chain; its full sequence is Transcription antitermination protein NusB (134 aa).

It belongs to the NusB family.

Involved in transcription antitermination. Required for transcription of ribosomal RNA (rRNA) genes. Binds specifically to the boxA antiterminator sequence of the ribosomal RNA (rrn) operons. In Shewanella woodyi (strain ATCC 51908 / MS32), this protein is Transcription antitermination protein NusB.